A 1025-amino-acid polypeptide reads, in one-letter code: AP-2 complex subunit alpha (1025 aa).

Residues 713–737 are disordered; the sequence is RSIMVPMPPPSRRNTIDDVNSKISS. At threonine 727 the chain carries Phosphothreonine. Phosphoserine is present on serine 733.

The protein belongs to the adaptor complexes large subunit family. As to quaternary structure, adaptor protein complex 2 (AP-2) is a heterotetramer composed of two large adaptins (alpha-type subunit APL3 and beta-type subunit APL1), a medium chain (mu-type subunit APM4) and a small adaptin (sigma-type subunit APS2).

It localises to the cell membrane. It is found in the membrane. The protein localises to the coated pit. Its function is as follows. Adaptins are components of the adaptor complexes which link clathrin to receptors in coated vesicles. Clathrin-associated protein complexes are believed to interact with the cytoplasmic tails of membrane proteins, leading to their selection and concentration. Alpha adaptin is a subunit of the plasma membrane adaptor. Facilitates interaction between APL1 and APS2. The chain is AP-2 complex subunit alpha (APL3) from Saccharomyces cerevisiae (strain ATCC 204508 / S288c) (Baker's yeast).